We begin with the raw amino-acid sequence, 617 residues long: KIF-binding protein (617 aa).

The interval 48–83 is disordered; it reads ALLGPAPEDEDEPAADDGPGDQALGAGEPREAEGPG. Residues 54-66 are compositionally biased toward acidic residues; it reads PEDEDEPAADDGP. Ser-174 is modified (phosphoserine).

Belongs to the KIF-binding protein family. Interacts with KIF1B; positively regulates KIF1B microtubule motor activity. Interacts with STMN2. In the embryo it is expressed in cortical neurons; expression increases during neuronal development.

It is found in the cytoplasm. The protein localises to the cytoskeleton. Activator of KIF1B plus-end-directed microtubule motor activity. Required for organization of axonal microtubules, and axonal outgrowth and maintenance during peripheral and central nervous system development. The polypeptide is KIF-binding protein (Mus musculus (Mouse)).